A 932-amino-acid polypeptide reads, in one-letter code: Protocadherin gamma-A3 (932 aa).

Residues 1 to 29 (MTNCLSFRNGRGLALLCALLGTLCETGSG) form the signal peptide. 6 Cadherin domains span residues 30–133 (QIRY…APNF), 134–242 (PTEE…PPMF), 243–347 (TQPE…APEI), 348–452 (TITS…PPTF), 453–562 (PHLS…APEI), and 570–682 (DGST…EPSA). Residues 30-692 (QIRYSVSEEL…KPNDSDLTLY (663 aa)) lie on the Extracellular side of the membrane. N-linked (GlcNAc...) asparagine glycosylation is found at N265, N419, and N545. N685 carries an N-linked (GlcNAc...) asparagine glycan. Residues 693-713 (LVVAVAAVSCVFLALVIVLLA) form a helical membrane-spanning segment. The Cytoplasmic segment spans residues 714–932 (HRLRRWHKSR…KKKSGKKEKK (219 aa)). Disordered regions lie at residues 806 to 841 (LLQQ…WPNN) and 902 to 932 (ATLT…KEKK). Residues 922–932 (NKKKSGKKEKK) show a composition bias toward basic residues.

It localises to the cell membrane. Its function is as follows. Potential calcium-dependent cell-adhesion protein. May be involved in the establishment and maintenance of specific neuronal connections in the brain. The polypeptide is Protocadherin gamma-A3 (PCDHGA3) (Pan troglodytes (Chimpanzee)).